Reading from the N-terminus, the 240-residue chain is DNA repair protein RecO (240 aa).

It belongs to the RecO family.

Involved in DNA repair and RecF pathway recombination. The protein is DNA repair protein RecO of Wolbachia sp. subsp. Drosophila simulans (strain wRi).